Here is a 264-residue protein sequence, read N- to C-terminus: 3-methyl-2-oxobutanoate hydroxymethyltransferase (264 aa).

Residues aspartate 45 and aspartate 84 each contribute to the Mg(2+) site. 3-methyl-2-oxobutanoate contacts are provided by residues 45–46, aspartate 84, and lysine 112; that span reads DS. Residue glutamate 114 participates in Mg(2+) binding. Glutamate 181 functions as the Proton acceptor in the catalytic mechanism.

Belongs to the PanB family. Homodecamer; pentamer of dimers. Mg(2+) serves as cofactor.

The protein resides in the cytoplasm. The catalysed reaction is 3-methyl-2-oxobutanoate + (6R)-5,10-methylene-5,6,7,8-tetrahydrofolate + H2O = 2-dehydropantoate + (6S)-5,6,7,8-tetrahydrofolate. It functions in the pathway cofactor biosynthesis; (R)-pantothenate biosynthesis; (R)-pantoate from 3-methyl-2-oxobutanoate: step 1/2. Functionally, catalyzes the reversible reaction in which hydroxymethyl group from 5,10-methylenetetrahydrofolate is transferred onto alpha-ketoisovalerate to form ketopantoate. The chain is 3-methyl-2-oxobutanoate hydroxymethyltransferase from Pseudoalteromonas translucida (strain TAC 125).